The sequence spans 77 residues: Conotoxin ArMKLT2-0322 (77 aa).

The N-terminal stretch at 1–22 (MKLTCVLIIAVLFLIVCQLNTA) is a signal peptide. Positions 23–47 (DDSRDKQEYRAVRLRDAIRNSRGSR) are excised as a propeptide. 3 disulfides stabilise this stretch: Cys-49–Cys-62, Cys-56–Cys-67, and Cys-61–Cys-74.

It belongs to the conotoxin O1 superfamily. In terms of tissue distribution, expressed by the venom duct.

The protein localises to the secreted. The polypeptide is Conotoxin ArMKLT2-0322 (Conus arenatus (Sand-dusted cone)).